A 361-amino-acid polypeptide reads, in one-letter code: tRNA-specific 2-thiouridylase MnmA (361 aa).

ATP contacts are provided by residues Gly-8–Ser-15 and Met-34. Residues Asn-94–Asp-96 form an interaction with target base in tRNA region. The active-site Nucleophile is the Cys-99. Cys-99 and Cys-195 are joined by a disulfide. Gly-123 serves as a coordination point for ATP. The interval Lys-145–Gln-147 is interaction with tRNA. Cys-195 acts as the Cysteine persulfide intermediate in catalysis. Residues Arg-307–Tyr-308 form an interaction with tRNA region.

This sequence belongs to the MnmA/TRMU family.

It localises to the cytoplasm. It catalyses the reaction S-sulfanyl-L-cysteinyl-[protein] + uridine(34) in tRNA + AH2 + ATP = 2-thiouridine(34) in tRNA + L-cysteinyl-[protein] + A + AMP + diphosphate + H(+). Catalyzes the 2-thiolation of uridine at the wobble position (U34) of tRNA, leading to the formation of s(2)U34. This Legionella pneumophila (strain Lens) protein is tRNA-specific 2-thiouridylase MnmA.